A 250-amino-acid chain; its full sequence is Ubiquinone/menaquinone biosynthesis C-methyltransferase UbiE (250 aa).

S-adenosyl-L-methionine contacts are provided by residues Thr73, Asp94, 122–123 (NA), and Ser139.

This sequence belongs to the class I-like SAM-binding methyltransferase superfamily. MenG/UbiE family.

The catalysed reaction is a 2-demethylmenaquinol + S-adenosyl-L-methionine = a menaquinol + S-adenosyl-L-homocysteine + H(+). The enzyme catalyses a 2-methoxy-6-(all-trans-polyprenyl)benzene-1,4-diol + S-adenosyl-L-methionine = a 5-methoxy-2-methyl-3-(all-trans-polyprenyl)benzene-1,4-diol + S-adenosyl-L-homocysteine + H(+). Its pathway is quinol/quinone metabolism; menaquinone biosynthesis; menaquinol from 1,4-dihydroxy-2-naphthoate: step 2/2. It functions in the pathway cofactor biosynthesis; ubiquinone biosynthesis. Methyltransferase required for the conversion of demethylmenaquinol (DMKH2) to menaquinol (MKH2) and the conversion of 2-polyprenyl-6-methoxy-1,4-benzoquinol (DDMQH2) to 2-polyprenyl-3-methyl-6-methoxy-1,4-benzoquinol (DMQH2). This Francisella tularensis subsp. holarctica (strain FTNF002-00 / FTA) protein is Ubiquinone/menaquinone biosynthesis C-methyltransferase UbiE.